Consider the following 333-residue polypeptide: DNA repair and recombination protein RadA (333 aa).

127 to 134 provides a ligand contact to ATP; it reads GEFGSGKT.

Belongs to the eukaryotic RecA-like protein family.

Functionally, involved in DNA repair and in homologous recombination. Binds and assemble on single-stranded DNA to form a nucleoprotein filament. Hydrolyzes ATP in a ssDNA-dependent manner and promotes DNA strand exchange between homologous DNA molecules. This chain is DNA repair and recombination protein RadA, found in Pyrobaculum aerophilum (strain ATCC 51768 / DSM 7523 / JCM 9630 / CIP 104966 / NBRC 100827 / IM2).